Reading from the N-terminus, the 138-residue chain is Cysteine desulfuration protein SufE (138 aa).

The Cysteine persulfide intermediate role is filled by C51.

This sequence belongs to the SufE family. In terms of assembly, homodimer. Interacts with SufS.

It is found in the cytoplasm. Its pathway is cofactor biosynthesis; iron-sulfur cluster biosynthesis. In terms of biological role, participates in cysteine desulfuration mediated by SufS. Cysteine desulfuration mobilizes sulfur from L-cysteine to yield L-alanine and constitutes an essential step in sulfur metabolism for biosynthesis of a variety of sulfur-containing biomolecules. Functions as a sulfur acceptor for SufS, by mediating the direct transfer of the sulfur atom from the S-sulfanylcysteine of SufS, an intermediate product of cysteine desulfuration process. The chain is Cysteine desulfuration protein SufE from Shigella boydii serotype 18 (strain CDC 3083-94 / BS512).